The sequence spans 358 residues: MTYDMKKYIRTDLEGFAGYSACKAPELVKTKNRIIKLDANENLYGAAPTVQKAMSTFDQYHIYPDATQFEIRRLLAEYTGVNMEQIICGAGSDQLIDLLLRLFINPGDEVINCPPTFAMYKFYTDLNRGTVVNVPRDAGYDVNIGGIKNALTPKTKLIFIAAPNNPTGTAISKEDIRQILDLGVPTVIDEAYYEFTGQTMVTDMPSYPNLMILRTFSKWAGLAGLRVGYGLFPPVIADYLSRIKDPYSVNIAADAAVRQTMLQREYMLETVKKIVDERKRLYTELSKFSWLKPYPSAANFILCKLLKGKAKDVQQALESQGILVRCFDAPMMENCLRFSVGKPEDTDALLKALGEMGE.

Lys218 is modified (N6-(pyridoxal phosphate)lysine).

This sequence belongs to the class-II pyridoxal-phosphate-dependent aminotransferase family. Histidinol-phosphate aminotransferase subfamily. In terms of assembly, homodimer. Requires pyridoxal 5'-phosphate as cofactor.

It catalyses the reaction L-histidinol phosphate + 2-oxoglutarate = 3-(imidazol-4-yl)-2-oxopropyl phosphate + L-glutamate. It participates in amino-acid biosynthesis; L-histidine biosynthesis; L-histidine from 5-phospho-alpha-D-ribose 1-diphosphate: step 7/9. In Dehalococcoides mccartyi (strain ATCC BAA-2266 / KCTC 15142 / 195) (Dehalococcoides ethenogenes (strain 195)), this protein is Histidinol-phosphate aminotransferase.